The following is a 313-amino-acid chain: Porphobilinogen deaminase (313 aa).

Cysteine 242 carries the S-(dipyrrolylmethanemethyl)cysteine modification.

This sequence belongs to the HMBS family. As to quaternary structure, monomer. It depends on dipyrromethane as a cofactor.

It catalyses the reaction 4 porphobilinogen + H2O = hydroxymethylbilane + 4 NH4(+). The protein operates within porphyrin-containing compound metabolism; protoporphyrin-IX biosynthesis; coproporphyrinogen-III from 5-aminolevulinate: step 2/4. In terms of biological role, tetrapolymerization of the monopyrrole PBG into the hydroxymethylbilane pre-uroporphyrinogen in several discrete steps. In Pseudomonas aeruginosa (strain LESB58), this protein is Porphobilinogen deaminase.